The primary structure comprises 267 residues: Orotidine 5'-phosphate decarboxylase (267 aa).

Catalysis depends on K93, which acts as the Proton donor.

The protein belongs to the OMP decarboxylase family. Type 2 subfamily.

The enzyme catalyses orotidine 5'-phosphate + H(+) = UMP + CO2. It participates in pyrimidine metabolism; UMP biosynthesis via de novo pathway; UMP from orotate: step 2/2. The chain is Orotidine 5'-phosphate decarboxylase from Halobacterium salinarum (strain ATCC 29341 / DSM 671 / R1).